The chain runs to 99 residues: Small ribosomal subunit protein eS24 (99 aa).

The protein belongs to the eukaryotic ribosomal protein eS24 family. As to quaternary structure, may be present in 2 copies per 70S ribosome. Part of the 30S ribosomal subunit, where it binds 16S rRNA at its canonical site at the bse of the body, as well as a possible second 50S binding site near 23S rRNA helix 45.

The polypeptide is Small ribosomal subunit protein eS24 (Pyrococcus furiosus (strain ATCC 43587 / DSM 3638 / JCM 8422 / Vc1)).